We begin with the raw amino-acid sequence, 537 residues long: uncharacterized protein (537 aa).

This is an uncharacterized protein from Mycobacterium bovis (strain ATCC BAA-935 / AF2122/97).